A 463-amino-acid polypeptide reads, in one-letter code: Glutamate--tRNA ligase 1 (463 aa).

A 'HIGH' region motif is present at residues 10–20 (PSPTGYLHIGG). A 'KMSKS' region motif is present at residues 238–242 (KLSKR). Position 241 (lysine 241) interacts with ATP.

This sequence belongs to the class-I aminoacyl-tRNA synthetase family. Glutamate--tRNA ligase type 1 subfamily. As to quaternary structure, monomer.

Its subcellular location is the cytoplasm. It carries out the reaction tRNA(Glu) + L-glutamate + ATP = L-glutamyl-tRNA(Glu) + AMP + diphosphate. Its function is as follows. Catalyzes the attachment of glutamate to tRNA(Glu) in a two-step reaction: glutamate is first activated by ATP to form Glu-AMP and then transferred to the acceptor end of tRNA(Glu). The sequence is that of Glutamate--tRNA ligase 1 from Helicobacter pylori (strain G27).